The primary structure comprises 233 residues: Movement and silencing protein TGBp1 (233 aa).

Residues 1-133 (MNHFINLLVA…CKLLSSLGIK (133 aa)) form the (+)RNA virus helicase ATP-binding domain. Residues 134 to 233 (VESHRRDRDV…EFPHTTSRPQ (100 aa)) enclose the (+)RNA virus helicase C-terminal domain.

The protein belongs to the Tymovirales TGBp1 protein family. As to quaternary structure, homodimer and homooligomer. Interacts with capsid protein. Interacts with host AGO1; this interaction targets the host protein for degradation, thereby suppressing the antiviral RNA silencing.

The protein localises to the host cytoplasm. Its function is as follows. Transports viral genome to neighboring plant cells directly through plasmosdesmata, without any budding. The movement protein allows efficient cell to cell propagation, by bypassing the host cell wall barrier. Increases plasmodesma size exclusion limit. Acts as a suppressor of RNA-mediated gene silencing, also known as post-transcriptional gene silencing (PTGS), a mechanism of plant viral defense that limits the accumulation of viral RNAs. The sequence is that of Movement and silencing protein TGBp1 from Carica papaya (Papaya).